A 310-amino-acid polypeptide reads, in one-letter code: Pseudouridine-5'-phosphate glycosidase (310 aa).

Catalysis depends on Glu-26, which acts as the Proton donor. Residues Lys-87 and Val-107 each contribute to the substrate site. Residue Asp-139 coordinates Mn(2+). 141-143 provides a ligand contact to substrate; sequence SAD. Lys-160 (nucleophile) is an active-site residue.

The protein belongs to the pseudouridine-5'-phosphate glycosidase family. In terms of assembly, homotrimer. The cofactor is Mn(2+).

It catalyses the reaction D-ribose 5-phosphate + uracil = psi-UMP + H2O. Its function is as follows. Catalyzes the reversible cleavage of pseudouridine 5'-phosphate (PsiMP) to ribose 5-phosphate and uracil. Functions biologically in the cleavage direction, as part of a pseudouridine degradation pathway. This is Pseudouridine-5'-phosphate glycosidase from Roseobacter denitrificans (strain ATCC 33942 / OCh 114) (Erythrobacter sp. (strain OCh 114)).